Here is a 209-residue protein sequence, read N- to C-terminus: Uracil phosphoribosyltransferase (209 aa).

5-phospho-alpha-D-ribose 1-diphosphate-binding positions include Arg-79, Arg-104, and 131-139 (DPMLATGGS). Uracil is bound by residues Ile-194 and 199–201 (GDA). Asp-200 contacts 5-phospho-alpha-D-ribose 1-diphosphate.

Belongs to the UPRTase family. Requires Mg(2+) as cofactor.

It carries out the reaction UMP + diphosphate = 5-phospho-alpha-D-ribose 1-diphosphate + uracil. The protein operates within pyrimidine metabolism; UMP biosynthesis via salvage pathway; UMP from uracil: step 1/1. With respect to regulation, allosterically activated by GTP. In terms of biological role, catalyzes the conversion of uracil and 5-phospho-alpha-D-ribose 1-diphosphate (PRPP) to UMP and diphosphate. The protein is Uracil phosphoribosyltransferase of Clostridium beijerinckii (strain ATCC 51743 / NCIMB 8052) (Clostridium acetobutylicum).